Consider the following 445-residue polypeptide: Chromosome partition protein MukF (445 aa).

The interval 213 to 241 (LSETSSTLRELQDTLQAASDELQTQILDI) is leucine-zipper.

The protein belongs to the MukF family. Interacts, and probably forms a ternary complex, with MukE and MukB via its C-terminal region. The complex formation is stimulated by calcium or magnesium. It is required for an interaction between MukE and MukB.

The protein resides in the cytoplasm. Its subcellular location is the nucleoid. Involved in chromosome condensation, segregation and cell cycle progression. May participate in facilitating chromosome segregation by condensation DNA from both sides of a centrally located replisome during cell division. Not required for mini-F plasmid partitioning. Probably acts via its interaction with MukB and MukE. Overexpression results in anucleate cells. It has a calcium binding activity. The sequence is that of Chromosome partition protein MukF from Vibrio parahaemolyticus serotype O3:K6 (strain RIMD 2210633).